The following is a 319-amino-acid chain: Thiamine pyrophosphokinase (319 aa).

Ser2 carries the post-translational modification N-acetylserine.

This sequence belongs to the thiamine pyrophosphokinase family. As to quaternary structure, homodimer.

It catalyses the reaction thiamine + ATP = thiamine diphosphate + AMP + H(+). It participates in cofactor biosynthesis; thiamine diphosphate biosynthesis; thiamine diphosphate from thiamine: step 1/1. Its function is as follows. Essential protein, it is the only enzyme in yeast capable of synthesizing thiamine pyrophosphate (TPP). The chain is Thiamine pyrophosphokinase from Saccharomyces cerevisiae (strain ATCC 204508 / S288c) (Baker's yeast).